A 403-amino-acid polypeptide reads, in one-letter code: MHIVFSVDDLTESFWPVPAPAPSPGSSSTPSPTQNVADGMTRSQSEWAFHRLINELSGSDSSPTTNTIERSPPPVQSLSRLEETVDETEDVVEIQKPQNHRRLPVDDQGKNRNRAPSSDPVDSSAPVVVDPNQYHAILKSKLELACAAVARRVGTVKPEDSSASASNQKQAQGSIVAQTSPGASSVRFSPTTSTQKKPDVPARQTSISSRDDSDDDDLDGDADNGDPTDVKRARRMLSNRESARRSRRRKQEQMNEFDTQVGQLRAEHSTLINRLSDMNHKYDAAAVDNRILRADIETLRTKVKMAEETVKRVTGVNPLHWSRPNMGIPFSNTPSASSSIPPNSNHILKPANSSTNTSAGLAQNQRVETANFLPEQVNREGMQNPFAPDSNLYETLPHWNHKH.

2 disordered regions span residues 13-128 and 156-259; these read SFWP…APVV and VKPE…EFDT. Residues 24–33 are compositionally biased toward low complexity; that stretch reads PGSSSTPSPT. Residues 56–69 are compositionally biased toward polar residues; sequence LSGSDSSPTTNTIE. 2 stretches are compositionally biased toward low complexity: residues 115–128 and 161–174; these read APSS…APVV and SSAS…AQGS. Residues 175 to 195 show a composition bias toward polar residues; that stretch reads IVAQTSPGASSVRFSPTTSTQ. The segment covering 212 to 226 has biased composition (acidic residues); the sequence is DSDDDDLDGDADNGD. Ser-213 bears the Phosphoserine mark. A bZIP domain is found at 229-292; sequence DVKRARRMLS…DAAAVDNRIL (64 aa). Positions 231–250 are basic motif; the sequence is KRARRMLSNRESARRSRRRK. The Nuclear localization signal signature appears at 233–240; sequence ARRMLSNR. The tract at residues 264-271 is leucine-zipper; it reads LRAEHSTL. The segment covering 332-345 has biased composition (low complexity); sequence NTPSASSSIPPNSN. Disordered stretches follow at residues 332-361 and 380-403; these read NTPS…SAGL and EGMQ…NHKH. Residues 351-361 show a composition bias toward polar residues; that stretch reads ANSSTNTSAGL.

Belongs to the bZIP family. In terms of assembly, homodimer. Forms a heterodimer with BZIP1, BZIP1, BZIP2, BZIP9, BZIP11, BZIP44, BZIP53 and BZIP63. Interacts with ABI3 and forms a complex made of ABI3, BZIP53 and BZIP25. In terms of tissue distribution, expressed in roots, shoots, stems, leaves, stipulae, siliques, seeds, pollen, and flowers.

It localises to the nucleus. Functionally, transcription factor that binds to the 5'-ACGT-3' box, especially present in G-box-like motif (5'-CCACGTGGCC-3'), ABRE elements, of seed storage protein (SSP) encoding gene promoters (e.g. At2S and CRU3) and promotes their expression in seeds when in complex with ABI3 and BZIP53. This chain is Basic leucine zipper 25 (BZIP25), found in Arabidopsis thaliana (Mouse-ear cress).